The primary structure comprises 299 residues: Protein LacX, plasmid (299 aa).

The polypeptide is Protein LacX, plasmid (lacX) (Lactococcus lactis subsp. lactis (Streptococcus lactis)).